Here is a 590-residue protein sequence, read N- to C-terminus: Type I inositol polyphosphate 5-phosphatase 1 (590 aa).

Residues 47-73 (DYSADSDDDYEDRSQEFDPISSGVTNP) are disordered. The span at 48–57 (YSADSDDDYE) shows a compositional bias: acidic residues. At serine 60 the chain carries Phosphoserine. 2 catalytic regions span residues 445-460 (ERII…INLS) and 523-538 (GKRR…WNGK).

Belongs to the inositol polyphosphate 5-phosphatase family. Expressed ubiquitously.

The catalysed reaction is 1D-myo-inositol 1,4,5-trisphosphate + H2O = 1D-myo-inositol 1,4-bisphosphate + phosphate. It catalyses the reaction 1D-myo-inositol 1,3,4,5-tetrakisphosphate + H2O = 1D-myo-inositol 1,3,4-trisphosphate + phosphate. Has phosphatase activity toward Ins(1,4,5)P3 and Ins(1,3,4,5)P4, but not toward Ins(1,4)P2, Ins(1)P. Seems to be involved in the abscisic acid (ABA) signaling pathway. Could also be able to hydrolyze PtdIns(4,5)P2 and PtdIns(3,4,5)P3. This Arabidopsis thaliana (Mouse-ear cress) protein is Type I inositol polyphosphate 5-phosphatase 1.